Here is a 160-residue protein sequence, read N- to C-terminus: 3-dehydroquinate dehydratase (160 aa).

The active-site Proton acceptor is Y28. The substrate site is built by N79, H85, and D92. H105 serves as the catalytic Proton donor. Substrate contacts are provided by residues M106–S107 and R116.

This sequence belongs to the type-II 3-dehydroquinase family. In terms of assembly, homododecamer.

The catalysed reaction is 3-dehydroquinate = 3-dehydroshikimate + H2O. It participates in metabolic intermediate biosynthesis; chorismate biosynthesis; chorismate from D-erythrose 4-phosphate and phosphoenolpyruvate: step 3/7. In terms of biological role, catalyzes a trans-dehydration via an enolate intermediate. The polypeptide is 3-dehydroquinate dehydratase (Gloeobacter violaceus (strain ATCC 29082 / PCC 7421)).